A 281-amino-acid chain; its full sequence is 2-dehydro-3-deoxyphosphooctonate aldolase (281 aa).

It belongs to the KdsA family.

It is found in the cytoplasm. The enzyme catalyses D-arabinose 5-phosphate + phosphoenolpyruvate + H2O = 3-deoxy-alpha-D-manno-2-octulosonate-8-phosphate + phosphate. It functions in the pathway carbohydrate biosynthesis; 3-deoxy-D-manno-octulosonate biosynthesis; 3-deoxy-D-manno-octulosonate from D-ribulose 5-phosphate: step 2/3. Its pathway is bacterial outer membrane biogenesis; lipopolysaccharide biosynthesis. The protein is 2-dehydro-3-deoxyphosphooctonate aldolase of Pseudomonas entomophila (strain L48).